The chain runs to 367 residues: Germination protease (367 aa).

Residues 1 to 15 (MKEPLDLSKYSVRTD) constitute a propeptide that is removed on maturation.

Belongs to the peptidase A25 family. As to quaternary structure, homotetramer. Autoproteolytically processed. The inactive tetrameric zymogen termed p46 autoprocesses to a smaller form termed p41, which is active only during spore germination.

It catalyses the reaction Endopeptidase action with P4 Glu or Asp, P1 preferably Glu &gt; Asp, P1' hydrophobic and P2' Ala.. In terms of biological role, initiates the rapid degradation of small, acid-soluble proteins during spore germination. This is Germination protease from Bacillus cereus (strain AH187).